Here is a 307-residue protein sequence, read N- to C-terminus: UDP-N-acetylenolpyruvoylglucosamine reductase (307 aa).

The region spanning 34 to 198 (TGGNADFYLS…LEAAFTLEPG (165 aa)) is the FAD-binding PCMH-type domain. Arginine 177 is a catalytic residue. Serine 227 acts as the Proton donor in catalysis. The active site involves glutamate 297.

Belongs to the MurB family. FAD serves as cofactor.

The protein resides in the cytoplasm. It catalyses the reaction UDP-N-acetyl-alpha-D-muramate + NADP(+) = UDP-N-acetyl-3-O-(1-carboxyvinyl)-alpha-D-glucosamine + NADPH + H(+). Its pathway is cell wall biogenesis; peptidoglycan biosynthesis. Cell wall formation. The protein is UDP-N-acetylenolpyruvoylglucosamine reductase of Staphylococcus haemolyticus (strain JCSC1435).